The sequence spans 216 residues: Adenylate kinase (216 aa).

10-15 (GAGKGT) provides a ligand contact to ATP. The segment at 30–59 (STGDMLRAAVAAGTEVGKRAKAVMDAGKLV) is NMP. AMP contacts are provided by residues Thr31, Arg36, 57–59 (KLV), 85–88 (GFPR), and Gln92. The tract at residues 126–163 (GRYTCANCGAGYHDENLRPKVEGVCDRCGSTHFKRRAD) is LID. Residue Arg127 coordinates ATP. Zn(2+) contacts are provided by Cys130, Cys133, Cys150, and Cys153. 2 residues coordinate AMP: Arg160 and Arg172. Ala200 lines the ATP pocket.

Belongs to the adenylate kinase family. Monomer.

The protein localises to the cytoplasm. The enzyme catalyses AMP + ATP = 2 ADP. Its pathway is purine metabolism; AMP biosynthesis via salvage pathway; AMP from ADP: step 1/1. Functionally, catalyzes the reversible transfer of the terminal phosphate group between ATP and AMP. Plays an important role in cellular energy homeostasis and in adenine nucleotide metabolism. This chain is Adenylate kinase, found in Rhizobium rhizogenes (strain K84 / ATCC BAA-868) (Agrobacterium radiobacter).